A 174-amino-acid chain; its full sequence is U1 small nuclear ribonucleoprotein C (174 aa).

The Matrin-type zinc-finger motif lies at 4-36 (YYCDYCDKYLTHDSPSVRKSHTVGKQHKLAVQL). Composition is skewed to low complexity over residues 82 to 109 (QQQQ…QQGM) and 122 to 140 (PHQF…FQPP). The tract at residues 82–174 (QQQQQQQQQQ…QHNQPTIPGL (93 aa)) is disordered. Positions 141–163 (HHQHHPHQQHQQHQQHQHQHQHQ) are enriched in basic residues. The span at 164–174 (QQHNQPTIPGL) shows a compositional bias: low complexity.

It belongs to the U1 small nuclear ribonucleoprotein C family. As to quaternary structure, component of the U1 snRNP. The U1 snRNP is composed of the U1 snRNA and the 7 core Sm proteins SNRPB, SNRPD1, SNRPD2, SNRPD3, SNRPE, SNRPF and SNRPG that assemble in a heptameric protein ring on the Sm site of the small nuclear RNA to form the core snRNP, and at least 3 U1 snRNP-specific proteins SNRNP70/U1-70K, SNRPA/U1-A and SNRPC/U1-C. SNRPC/U1-C interacts with U1 snRNA and the 5' splice-site region of the pre-mRNA.

Its subcellular location is the nucleus. In terms of biological role, component of the spliceosomal U1 snRNP, which is essential for recognition of the pre-mRNA 5' splice-site and the subsequent assembly of the spliceosome. SNRPC/U1-C is directly involved in initial 5' splice-site recognition for both constitutive and regulated alternative splicing. The interaction with the 5' splice-site seems to precede base-pairing between the pre-mRNA and the U1 snRNA. Stimulates commitment or early (E) complex formation by stabilizing the base pairing of the 5' end of the U1 snRNA and the 5' splice-site region. The sequence is that of U1 small nuclear ribonucleoprotein C from Dictyostelium discoideum (Social amoeba).